We begin with the raw amino-acid sequence, 280 residues long: uncharacterized protein (280 aa).

4 stretches are compositionally biased toward basic and acidic residues: residues 110–122 (EKQA…ERLQ), 167–177 (ATGEERAECGR), 223–261 (ARQH…RPQQ), and 269–280 (DVDRSKSCLEAE). Disordered regions lie at residues 110-137 (EKQA…KTEH), 151-177 (HRGE…ECGR), and 219-280 (TIID…LEAE).

This is an uncharacterized protein from Agrobacterium vitis (Rhizobium vitis).